The sequence spans 912 residues: Translation initiation factor IF-2 (912 aa).

The segment at 185 to 204 is disordered; that stretch reads NATRPKRKTKEEKQKEREER. A compositionally biased stretch (basic and acidic residues) spans 193–204; the sequence is TKEEKQKEREER. Residues 411–581 enclose the tr-type G domain; that stretch reads LRPPIVTIMG…LLEAELLDLK (171 aa). Positions 420–427 are G1; the sequence is GHVDHGKT. 420–427 is a GTP binding site; the sequence is GHVDHGKT. Residues 445-449 form a G2 region; sequence GITQH. Residues 467–470 form a G3 region; the sequence is DTPG. Residues 467–471 and 521–524 contribute to the GTP site; these read DTPGH and NKID. The G4 stretch occupies residues 521–524; that stretch reads NKID. The segment at 557-559 is G5; it reads SAK.

The protein belongs to the TRAFAC class translation factor GTPase superfamily. Classic translation factor GTPase family. IF-2 subfamily.

The protein resides in the cytoplasm. In terms of biological role, one of the essential components for the initiation of protein synthesis. Protects formylmethionyl-tRNA from spontaneous hydrolysis and promotes its binding to the 30S ribosomal subunits. Also involved in the hydrolysis of GTP during the formation of the 70S ribosomal complex. This chain is Translation initiation factor IF-2, found in Azobacteroides pseudotrichonymphae genomovar. CFP2.